Consider the following 252-residue polypeptide: Phosphate import ATP-binding protein PstB 2 (252 aa).

In terms of domain architecture, ABC transporter spans 6 to 247 (ISINDLSVYF…PQHKETEDYI (242 aa)). 38-45 (GPSGSGKS) contacts ATP.

The protein belongs to the ABC transporter superfamily. Phosphate importer (TC 3.A.1.7) family. The complex is composed of two ATP-binding proteins (PstB), two transmembrane proteins (PstC and PstA) and a solute-binding protein (PstS).

The protein localises to the cell membrane. It carries out the reaction phosphate(out) + ATP + H2O = ADP + 2 phosphate(in) + H(+). Functionally, part of the ABC transporter complex PstSACB involved in phosphate import. Responsible for energy coupling to the transport system. This is Phosphate import ATP-binding protein PstB 2 from Streptococcus thermophilus (strain CNRZ 1066).